We begin with the raw amino-acid sequence, 262 residues long: Acyl-[acyl-carrier-protein]--UDP-N-acetylglucosamine O-acyltransferase (262 aa).

The protein belongs to the transferase hexapeptide repeat family. LpxA subfamily. As to quaternary structure, homotrimer.

The protein resides in the cytoplasm. It catalyses the reaction a (3R)-hydroxyacyl-[ACP] + UDP-N-acetyl-alpha-D-glucosamine = a UDP-3-O-[(3R)-3-hydroxyacyl]-N-acetyl-alpha-D-glucosamine + holo-[ACP]. It functions in the pathway glycolipid biosynthesis; lipid IV(A) biosynthesis; lipid IV(A) from (3R)-3-hydroxytetradecanoyl-[acyl-carrier-protein] and UDP-N-acetyl-alpha-D-glucosamine: step 1/6. Involved in the biosynthesis of lipid A, a phosphorylated glycolipid that anchors the lipopolysaccharide to the outer membrane of the cell. The polypeptide is Acyl-[acyl-carrier-protein]--UDP-N-acetylglucosamine O-acyltransferase (Vibrio cholerae serotype O1 (strain ATCC 39541 / Classical Ogawa 395 / O395)).